Here is a 545-residue protein sequence, read N- to C-terminus: ATP synthase subunit alpha (545 aa).

174–181 (GDRKTGKT) lines the ATP pocket.

It belongs to the ATPase alpha/beta chains family. In terms of assembly, F-type ATPases have 2 components, CF(1) - the catalytic core - and CF(0) - the membrane proton channel. CF(1) has five subunits: alpha(3), beta(3), gamma(1), delta(1), epsilon(1). CF(0) has three main subunits: a(1), b(2) and c(9-12). The alpha and beta chains form an alternating ring which encloses part of the gamma chain. CF(1) is attached to CF(0) by a central stalk formed by the gamma and epsilon chains, while a peripheral stalk is formed by the delta and b chains.

It localises to the cell membrane. The enzyme catalyses ATP + H2O + 4 H(+)(in) = ADP + phosphate + 5 H(+)(out). Functionally, produces ATP from ADP in the presence of a proton gradient across the membrane. The alpha chain is a regulatory subunit. The polypeptide is ATP synthase subunit alpha (Cutibacterium acnes (strain DSM 16379 / KPA171202) (Propionibacterium acnes)).